The primary structure comprises 178 residues: Large ribosomal subunit protein uL6 (178 aa).

This sequence belongs to the universal ribosomal protein uL6 family. As to quaternary structure, part of the 50S ribosomal subunit.

Its function is as follows. This protein binds to the 23S rRNA, and is important in its secondary structure. It is located near the subunit interface in the base of the L7/L12 stalk, and near the tRNA binding site of the peptidyltransferase center. The sequence is that of Large ribosomal subunit protein uL6 from Wolinella succinogenes (strain ATCC 29543 / DSM 1740 / CCUG 13145 / JCM 31913 / LMG 7466 / NCTC 11488 / FDC 602W) (Vibrio succinogenes).